A 325-amino-acid chain; its full sequence is Beta-ketoacyl-[acyl-carrier-protein] synthase III (325 aa).

Residues C113 and H250 contribute to the active site. The interval 251 to 255 is ACP-binding; sequence QANIR. N280 is an active-site residue.

The protein belongs to the thiolase-like superfamily. FabH family. As to quaternary structure, homodimer.

It localises to the cytoplasm. The enzyme catalyses malonyl-[ACP] + acetyl-CoA + H(+) = 3-oxobutanoyl-[ACP] + CO2 + CoA. The protein operates within lipid metabolism; fatty acid biosynthesis. Catalyzes the condensation reaction of fatty acid synthesis by the addition to an acyl acceptor of two carbons from malonyl-ACP. Catalyzes the first condensation reaction which initiates fatty acid synthesis and may therefore play a role in governing the total rate of fatty acid production. Possesses both acetoacetyl-ACP synthase and acetyl transacylase activities. Its substrate specificity determines the biosynthesis of branched-chain and/or straight-chain of fatty acids. This chain is Beta-ketoacyl-[acyl-carrier-protein] synthase III, found in Streptococcus suis (strain 98HAH33).